The sequence spans 206 residues: 2,3-bisphosphoglycerate-dependent phosphoglycerate mutase (206 aa).

Substrate is bound by residues 9-16 (RHGQSEWN), 22-23 (TG), Arg-61, 88-91 (ERDY), Lys-99, 115-116 (RR), and 159-160 (GN). The Tele-phosphohistidine intermediate role is filled by His-10. The active-site Proton donor/acceptor is the Glu-88.

It belongs to the phosphoglycerate mutase family. BPG-dependent PGAM subfamily. In terms of assembly, homodimer.

It carries out the reaction (2R)-2-phosphoglycerate = (2R)-3-phosphoglycerate. It functions in the pathway carbohydrate degradation; glycolysis; pyruvate from D-glyceraldehyde 3-phosphate: step 3/5. Functionally, catalyzes the interconversion of 2-phosphoglycerate and 3-phosphoglycerate. This chain is 2,3-bisphosphoglycerate-dependent phosphoglycerate mutase, found in Brucella anthropi (strain ATCC 49188 / DSM 6882 / CCUG 24695 / JCM 21032 / LMG 3331 / NBRC 15819 / NCTC 12168 / Alc 37) (Ochrobactrum anthropi).